We begin with the raw amino-acid sequence, 633 residues long: Glutamyl-tRNA(Gln) amidotransferase subunit E (633 aa).

It belongs to the GatB/GatE family. GatE subfamily. In terms of assembly, heterodimer of GatD and GatE.

The enzyme catalyses L-glutamyl-tRNA(Gln) + L-glutamine + ATP + H2O = L-glutaminyl-tRNA(Gln) + L-glutamate + ADP + phosphate + H(+). In terms of biological role, allows the formation of correctly charged Gln-tRNA(Gln) through the transamidation of misacylated Glu-tRNA(Gln) in organisms which lack glutaminyl-tRNA synthetase. The reaction takes place in the presence of glutamine and ATP through an activated gamma-phospho-Glu-tRNA(Gln). The GatDE system is specific for glutamate and does not act on aspartate. The chain is Glutamyl-tRNA(Gln) amidotransferase subunit E from Saccharolobus islandicus (strain L.S.2.15 / Lassen #1) (Sulfolobus islandicus).